Here is a 536-residue protein sequence, read N- to C-terminus: Chaperonin GroEL (536 aa).

ATP is bound by residues 30-33 (TLGP), 86-90 (DGTTT), glycine 414, and aspartate 494.

Belongs to the chaperonin (HSP60) family. As to quaternary structure, forms a cylinder of 14 subunits composed of two heptameric rings stacked back-to-back. Interacts with the co-chaperonin GroES.

It localises to the cytoplasm. It catalyses the reaction ATP + H2O + a folded polypeptide = ADP + phosphate + an unfolded polypeptide.. Functionally, together with its co-chaperonin GroES, plays an essential role in assisting protein folding. The GroEL-GroES system forms a nano-cage that allows encapsulation of the non-native substrate proteins and provides a physical environment optimized to promote and accelerate protein folding. The polypeptide is Chaperonin GroEL (Methanosarcina barkeri (strain Fusaro / DSM 804)).